A 448-amino-acid polypeptide reads, in one-letter code: Damage-control phosphatase ARMT1 (448 aa).

Residues Asp-257 and Asn-258 each contribute to the Mn(2+) site. Substrate is bound at residue 257–258 (DN). Residues Glu-262 and Asp-295 each coordinate S-adenosyl-L-methionine. Asp-295 is a binding site for Mn(2+). Substrate contacts are provided by residues 371–375 (DLNYR) and Lys-408. The Subfamily III RTxK motif signature appears at 405-408 (RTLK).

The protein belongs to the damage-control phosphatase family. Sugar phosphate phosphatase III subfamily. The cofactor is Mn(2+). Ni(2+) is required as a cofactor. Automethylated.

The enzyme catalyses beta-D-fructose 1-phosphate + H2O = D-fructose + phosphate. It catalyses the reaction beta-D-fructose 6-phosphate = dihydroxyacetone + D-glyceraldehyde 3-phosphate. The catalysed reaction is L-glutamyl-[protein] + S-adenosyl-L-methionine = [protein]-L-glutamate 5-O-methyl ester + S-adenosyl-L-homocysteine. Its function is as follows. Metal-dependent phosphatase that shows phosphatase activity against several substrates, including fructose-1-phosphate and fructose-6-phosphate. Its preference for fructose-1-phosphate, a strong glycating agent that causes DNA damage rather than a canonical yeast metabolite, suggests a damage-control function in hexose phosphate metabolism. Has also been shown to have O-methyltransferase activity that methylates glutamate residues of target proteins to form gamma-glutamyl methyl ester residues. Possibly methylates PCNA, suggesting it is involved in the DNA damage response. The polypeptide is Damage-control phosphatase ARMT1 (Danio rerio (Zebrafish)).